The sequence spans 122 residues: NADPH-dependent 7-cyano-7-deazaguanine reductase (122 aa).

Residue C34 is the Thioimide intermediate of the active site. D41 serves as the catalytic Proton donor. Substrate-binding positions include 56–58 (VEL) and 75–76 (HE).

The protein belongs to the GTP cyclohydrolase I family. QueF type 1 subfamily.

It localises to the cytoplasm. The catalysed reaction is 7-aminomethyl-7-carbaguanine + 2 NADP(+) = 7-cyano-7-deazaguanine + 2 NADPH + 3 H(+). The protein operates within tRNA modification; tRNA-queuosine biosynthesis. Its function is as follows. Catalyzes the NADPH-dependent reduction of 7-cyano-7-deazaguanine (preQ0) to 7-aminomethyl-7-deazaguanine (preQ1). This is NADPH-dependent 7-cyano-7-deazaguanine reductase from Anaeromyxobacter sp. (strain Fw109-5).